The chain runs to 592 residues: Ferric-chelate reductase 1 (592 aa).

Residues 2–22 (AAPQITLSVLVIALLTCSVTA) form a helical membrane-spanning segment. The Reelin domain maps to 13-179 (IALLTCSVTA…FTTPKATTQP (167 aa)). N85, N308, N321, and N353 each carry an N-linked (GlcNAc...) asparagine glycan. The 116-residue stretch at 216 to 331 (EPACVFLSFT…ESYYIFFAEG (116 aa)) folds into the DOMON domain. Residues 335–534 (DGRIFRHSQQ…IGTEVILEIH (200 aa)) form the Cytochrome b561 domain. A helical transmembrane segment spans residues 372–392 (AHGALMFVAWMTTVSIGVLVA). Heme b is bound by residues H373 and H414. 5 helical membrane-spanning segments follow: residues 415–435 (RMLMVATSLLTCVAFVLPFVY), 446–466 (HPYLGCTVMTLAVLQPLLATF), 477–499 (VFNWTHWSVGTAARIIAVAAMFL), 515–535 (YAMMGFVVWHIGTEVILEIHA), and 569–589 (VVLAVYICGNVIFLSIFLSAI). Positions 446 and 482 each coordinate heme b.

The protein belongs to the FRRS1 family. The cofactor is heme b. Expressed in spleen, liver and kidney with low expression in brain. Localizes in adult brain to the choroid plexus of the fourth, third, and lateral ventricles and to ependymal cells that line the ventricles.

The protein localises to the membrane. Ferric-chelate reductases reduce Fe(3+) to Fe(2+) before its transport from the endosome to the cytoplasm. The polypeptide is Ferric-chelate reductase 1 (FRRS1) (Mus musculus (Mouse)).